The sequence spans 117 residues: Large ribosomal subunit protein bL19 (117 aa).

Belongs to the bacterial ribosomal protein bL19 family.

Its function is as follows. This protein is located at the 30S-50S ribosomal subunit interface and may play a role in the structure and function of the aminoacyl-tRNA binding site. The chain is Large ribosomal subunit protein bL19 from Aliivibrio fischeri (strain ATCC 700601 / ES114) (Vibrio fischeri).